Reading from the N-terminus, the 373-residue chain is SH3 domain-binding protein 5-like (373 aa).

The disordered stretch occupies residues 1 to 36; the sequence is MEGKEGPPCEVRLPTPGAEREGPVHPELGAFGESAS. 2 coiled-coil regions span residues 35–98 and 170–258; these read ASDA…ESAR and WQEM…KLRY. 2 disordered regions span residues 274–308 and 332–373; these read ARRT…PADT and DLTD…SVSL. The span at 332-360 shows a compositional bias: basic and acidic residues; it reads DLTDVTSLDGRETGAVESGGSRERGEDRG.

It belongs to the SH3BP5 family.

Functionally, functions as a guanine nucleotide exchange factor (GEF) for rab11a. The polypeptide is SH3 domain-binding protein 5-like (sh3bp5l) (Xenopus laevis (African clawed frog)).